The chain runs to 557 residues: UvrABC system protein C (557 aa).

In terms of domain architecture, GIY-YIG spans 14–89; it reads EEPGVYIFKN…IKKYRPKYNV (76 aa). Residues 194–229 form the UVR domain; the sequence is EEVFDYLKEKMETHSRMLDFENAAKYRDLLLNLSNV.

Belongs to the UvrC family. Interacts with UvrB in an incision complex.

The protein localises to the cytoplasm. The UvrABC repair system catalyzes the recognition and processing of DNA lesions. UvrC both incises the 5' and 3' sides of the lesion. The N-terminal half is responsible for the 3' incision and the C-terminal half is responsible for the 5' incision. The sequence is that of UvrABC system protein C from Thermotoga petrophila (strain ATCC BAA-488 / DSM 13995 / JCM 10881 / RKU-1).